The chain runs to 990 residues: Storkhead-box protein 1 (990 aa).

Positions 396-408 are enriched in basic and acidic residues; it reads TTRHKDSSKEVIG. Disordered stretches follow at residues 396–471, 562–586, 712–736, and 809–832; these read TTRH…VHHL, VAKA…PRRV, GLSD…DGGC, and LFSN…SRIP. A compositionally biased stretch (basic residues) spans 416 to 431; the sequence is KSRRRGSSHKGRHKAR. Residues 809–830 are compositionally biased toward polar residues; sequence LFSNAGESPNPDLSDNPGQNSR.

Detected in sensory epithelial cells of the inner ear but not in adjacent surrounding tissue (at protein level).

The protein localises to the nucleus. It is found in the cytoplasm. It localises to the cytoskeleton. The protein resides in the microtubule organizing center. Its subcellular location is the centrosome. Involved in regulating the levels of reactive oxidative species and reactive nitrogen species and in mitochondrial homeostasis in the placenta. Required for regulation of inner ear epithelial cell proliferation via the AKT signaling pathway. Involved in cell cycle regulation by binding to the CCNB1 promoter, up-regulating its expression and promoting mitotic entry. Induces phosphorylation of MAPT/tau. The chain is Storkhead-box protein 1 from Mus musculus (Mouse).